The sequence spans 263 residues: 5'-nucleotidase SurE (263 aa).

Residues Asp21, Asp22, Ser52, and Asn105 each coordinate a divalent metal cation.

This sequence belongs to the SurE nucleotidase family. A divalent metal cation is required as a cofactor.

The protein resides in the cytoplasm. It carries out the reaction a ribonucleoside 5'-phosphate + H2O = a ribonucleoside + phosphate. Its function is as follows. Nucleotidase that shows phosphatase activity on nucleoside 5'-monophosphates. The polypeptide is 5'-nucleotidase SurE (Vibrio cholerae serotype O1 (strain ATCC 39541 / Classical Ogawa 395 / O395)).